A 184-amino-acid chain; its full sequence is Photosystem I assembly protein Ycf4 (184 aa).

2 helical membrane passes run 22-42 (FCWA…GTSS) and 57-77 (IVFF…LFIS).

This sequence belongs to the Ycf4 family.

The protein resides in the plastid. The protein localises to the chloroplast thylakoid membrane. Functionally, seems to be required for the assembly of the photosystem I complex. This is Photosystem I assembly protein Ycf4 from Helianthus annuus (Common sunflower).